Here is a 277-residue protein sequence, read N- to C-terminus: Putative endonuclease (277 aa).

Its function is as follows. Putative endonuclease. This chain is Putative endonuclease, found in Escherichia coli (Enterobacteria phage T5).